The following is a 215-amino-acid chain: Myelin protein zero-like protein 2 (215 aa).

Residues 1 to 26 (MYGKSSTRAVLLLLGIQLTALWPIAA) form the signal peptide. Residues 27 to 141 (VEIYTSRVLE…DGVIGEIRLS (115 aa)) enclose the Ig-like V-type domain. Residues 27 to 154 (VEIYTSRVLE…TVRFSEIHFL (128 aa)) lie on the Extracellular side of the membrane. N39 and N118 each carry an N-linked (GlcNAc...) asparagine glycan. Residues C47 and C123 are joined by a disulfide bond. Residues 155–175 (ALAIGSACALMIIIVIVVVLF) traverse the membrane as a helical segment. Topologically, residues 176 to 215 (QHYRKKRWAERAHKVVEIKSKEEERLNQEKKVSVYLEDTD) are cytoplasmic.

This sequence belongs to the myelin P0 protein family. As to expression, widely expressed. In fetal tissues, highest expression in the inner ear. In adult tissues, highest levels in thymus and lung.

The protein localises to the membrane. Its function is as follows. Mediates homophilic cell-cell adhesion. This is Myelin protein zero-like protein 2 (MPZL2) from Homo sapiens (Human).